We begin with the raw amino-acid sequence, 372 residues long: Glutamine synthetase (372 aa).

The region spanning Ile26 to Gly105 is the GS beta-grasp domain. The 261-residue stretch at His112–Leu372 folds into the GS catalytic domain.

Belongs to the glutamine synthetase family. Homooctamer.

The protein resides in the cytoplasm. It catalyses the reaction L-glutamate + NH4(+) + ATP = L-glutamine + ADP + phosphate + H(+). The sequence is that of Glutamine synthetase (GLN1) from Kluyveromyces lactis (strain ATCC 8585 / CBS 2359 / DSM 70799 / NBRC 1267 / NRRL Y-1140 / WM37) (Yeast).